The sequence spans 370 residues: Phosphate-binding protein PstS2 (370 aa).

A signal peptide spans 1–22; the sequence is MKFARSGAAVSLLAAGTLVLTA. A lipid anchor (N-palmitoyl cysteine) is attached at C23. The S-diacylglycerol cysteine moiety is linked to residue C23. Phosphate is bound by residues 54–56, S84, D102, and 191–193; these read STA and SGT.

Belongs to the PstS family. As to quaternary structure, the complex is composed of two ATP-binding proteins (PstB), two transmembrane proteins (PstC and PstA) and a solute-binding protein (PstS).

The protein resides in the cell membrane. Its subcellular location is the secreted. Functions in inorganic phosphate uptake, a phosphate-binding protein, although probably not the main uptake protein under phosphate starvation. Part of the ABC transporter complex PstSACB involved in phosphate import. This is Phosphate-binding protein PstS2 (pstS2) from Mycobacterium bovis (strain BCG / Pasteur 1173P2).